The chain runs to 320 residues: uncharacterized protein (320 aa).

It belongs to the NAD(P)-dependent epimerase/dehydratase family.

This is an uncharacterized protein from Staphylococcus saprophyticus subsp. saprophyticus (strain ATCC 15305 / DSM 20229 / NCIMB 8711 / NCTC 7292 / S-41).